The primary structure comprises 394 residues: Uroporphyrinogen decarboxylase 2, chloroplastic (394 aa).

Residues R74–R78, F93, S123, D124, Y201, S256, and H371 each bind substrate.

It belongs to the uroporphyrinogen decarboxylase family. As to quaternary structure, homodimer.

Its subcellular location is the plastid. It is found in the chloroplast. The enzyme catalyses uroporphyrinogen III + 4 H(+) = coproporphyrinogen III + 4 CO2. It functions in the pathway porphyrin-containing compound metabolism; protoporphyrin-IX biosynthesis; coproporphyrinogen-III from 5-aminolevulinate: step 4/4. Its pathway is porphyrin-containing compound metabolism; chlorophyll biosynthesis. Catalyzes the decarboxylation of four acetate groups of uroporphyrinogen-III to yield coproporphyrinogen-III. This is Uroporphyrinogen decarboxylase 2, chloroplastic (HEME2) from Arabidopsis thaliana (Mouse-ear cress).